The sequence spans 1498 residues: DNA-directed RNA polymerase subunit beta' (1498 aa).

Positions 67, 69, 82, and 85 each coordinate Zn(2+). Positions 499, 501, and 503 each coordinate Mg(2+). The Zn(2+) site is built by cysteine 867, cysteine 943, cysteine 950, and cysteine 953.

This sequence belongs to the RNA polymerase beta' chain family. In terms of assembly, the RNAP catalytic core consists of 2 alpha, 1 beta, 1 beta' and 1 omega subunit. When a sigma factor is associated with the core the holoenzyme is formed, which can initiate transcription. Mg(2+) serves as cofactor. Zn(2+) is required as a cofactor.

The catalysed reaction is RNA(n) + a ribonucleoside 5'-triphosphate = RNA(n+1) + diphosphate. Its function is as follows. DNA-dependent RNA polymerase catalyzes the transcription of DNA into RNA using the four ribonucleoside triphosphates as substrates. The polypeptide is DNA-directed RNA polymerase subunit beta' (Chlorobium phaeobacteroides (strain BS1)).